We begin with the raw amino-acid sequence, 188 residues long: Putative manganese efflux pump MntP (188 aa).

Transmembrane regions (helical) follow at residues 3 to 23 (LSATILLAFGMSMDAFAASIG), 41 to 61 (LIFGAIETLTPLVGWGLGMLA), 62 to 82 (SQFILEWNHWIAFILLVFLGG), 107 to 129 (LLVTTAFATSLDAMAVGVGLAFL), 143 to 163 (ATFIMSTLGMMVGRFIGPLLG), and 168 to 188 (ILGGIVLIGIGSEILWSHFAG).

The protein belongs to the MntP (TC 9.B.29) family.

The protein resides in the cell inner membrane. Functionally, probably functions as a manganese efflux pump. In Klebsiella pneumoniae subsp. pneumoniae (strain ATCC 700721 / MGH 78578), this protein is Putative manganese efflux pump MntP.